The sequence spans 501 residues: Glycerol kinase (501 aa).

An ADP-binding site is contributed by Thr17. Residues Thr17, Thr18, and Ser19 each contribute to the ATP site. Thr17 serves as a coordination point for sn-glycerol 3-phosphate. Arg21 contacts ADP. 4 residues coordinate sn-glycerol 3-phosphate: Arg87, Glu88, Tyr139, and Asp243. Residues Arg87, Glu88, Tyr139, Asp243, and Gln244 each contribute to the glycerol site. Residues Thr265 and Gly308 each coordinate ADP. ATP is bound by residues Thr265, Gly308, Gln312, and Gly409. ADP-binding residues include Gly409 and Asn413.

The protein belongs to the FGGY kinase family.

It catalyses the reaction glycerol + ATP = sn-glycerol 3-phosphate + ADP + H(+). The protein operates within polyol metabolism; glycerol degradation via glycerol kinase pathway; sn-glycerol 3-phosphate from glycerol: step 1/1. Inhibited by fructose 1,6-bisphosphate (FBP). Key enzyme in the regulation of glycerol uptake and metabolism. Catalyzes the phosphorylation of glycerol to yield sn-glycerol 3-phosphate. The polypeptide is Glycerol kinase (Pseudomonas fluorescens (strain SBW25)).